A 507-amino-acid chain; its full sequence is Protein phosphatase 1J (507 aa).

Disordered regions lie at residues 1–102 (MLNR…RLPW) and 197–220 (LCLP…PQSC). Residues 14 to 23 (SSGGTSSQRS) show a composition bias toward low complexity. Position 41 is a phosphothreonine (T41). Residues 59 to 73 (TAETTVSFSRPTFLQ) show a composition bias toward polar residues. Phosphoserine occurs at positions 65 and 75. In terms of domain architecture, PPM-type phosphatase spans 103 to 499 (STGYAEVINA…DDISVFVIPL (397 aa)). A compositionally biased stretch (low complexity) spans 199–212 (LPSTPGTPGAPSPS).

Belongs to the PP2C family. In terms of assembly, interacts with UBE2I/UBC9. In terms of tissue distribution, specifically expressed in the testicular germ cells.

The catalysed reaction is O-phospho-L-seryl-[protein] + H2O = L-seryl-[protein] + phosphate. The enzyme catalyses O-phospho-L-threonyl-[protein] + H2O = L-threonyl-[protein] + phosphate. This Mus musculus (Mouse) protein is Protein phosphatase 1J (Ppm1j).